Consider the following 418-residue polypeptide: uncharacterized protein (418 aa).

In terms of domain architecture, N-acetyltransferase spans 7-158 (IDVRPIAEAE…TGLDPRWSGP (152 aa)). Residues 87–89 (VTV) and 95–100 (RRGLLT) contribute to the acetyl-CoA site. Tyr-128 functions as the Proton donor in the catalytic mechanism. The active-site Proton acceptor; via carboxylate is the Phe-418.

This sequence belongs to the acetyltransferase Eis family. In terms of assembly, homohexamer; trimer of dimers.

This is an uncharacterized protein from Streptomyces avermitilis (strain ATCC 31267 / DSM 46492 / JCM 5070 / NBRC 14893 / NCIMB 12804 / NRRL 8165 / MA-4680).